A 365-amino-acid polypeptide reads, in one-letter code: Succinyl-diaminopimelate desuccinylase (365 aa).

Residue His65 coordinates Zn(2+). Asp67 is an active-site residue. Zn(2+) is bound at residue Asp96. Glu126 (proton acceptor) is an active-site residue. The Zn(2+) site is built by Glu127, Glu155, and His340.

The protein belongs to the peptidase M20A family. DapE subfamily. Homodimer. Zn(2+) serves as cofactor. It depends on Co(2+) as a cofactor.

The catalysed reaction is N-succinyl-(2S,6S)-2,6-diaminopimelate + H2O = (2S,6S)-2,6-diaminopimelate + succinate. It participates in amino-acid biosynthesis; L-lysine biosynthesis via DAP pathway; LL-2,6-diaminopimelate from (S)-tetrahydrodipicolinate (succinylase route): step 3/3. In terms of biological role, catalyzes the hydrolysis of N-succinyl-L,L-diaminopimelic acid (SDAP), forming succinate and LL-2,6-diaminopimelate (DAP), an intermediate involved in the bacterial biosynthesis of lysine and meso-diaminopimelic acid, an essential component of bacterial cell walls. This chain is Succinyl-diaminopimelate desuccinylase, found in Campylobacter jejuni subsp. jejuni serotype O:23/36 (strain 81-176).